The following is a 283-amino-acid chain: Shikimate dehydrogenase (NADP(+)) (283 aa).

Shikimate is bound by residues 16–18 (SLS) and T63. Residue K67 is the Proton acceptor of the active site. D79 serves as a coordination point for NADP(+). 2 residues coordinate shikimate: N88 and D103. Residues 128-132 (GAGGA), A223, and G243 contribute to the NADP(+) site.

Belongs to the shikimate dehydrogenase family. Homodimer.

The enzyme catalyses shikimate + NADP(+) = 3-dehydroshikimate + NADPH + H(+). Its pathway is metabolic intermediate biosynthesis; chorismate biosynthesis; chorismate from D-erythrose 4-phosphate and phosphoenolpyruvate: step 4/7. Involved in the biosynthesis of the chorismate, which leads to the biosynthesis of aromatic amino acids. Catalyzes the reversible NADPH linked reduction of 3-dehydroshikimate (DHSA) to yield shikimate (SA). The chain is Shikimate dehydrogenase (NADP(+)) from Xanthomonas campestris pv. campestris (strain B100).